The following is a 176-amino-acid chain: Large ribosomal subunit protein uL22z (176 aa).

The span at 154–163 (KEEPVKKEPE) shows a compositional bias: basic and acidic residues. Residues 154–176 (KEEPVKKEPETQLAAKSKKGASS) form a disordered region.

It belongs to the universal ribosomal protein uL22 family.

This chain is Large ribosomal subunit protein uL22z (RPL17A), found in Arabidopsis thaliana (Mouse-ear cress).